The primary structure comprises 229 residues: LexA repressor (229 aa).

The segment at residues Ile-28–Lys-48 is a DNA-binding region (H-T-H motif). Residues Ser-147 and Lys-184 each act as for autocatalytic cleavage activity in the active site.

It belongs to the peptidase S24 family. Homodimer.

It catalyses the reaction Hydrolysis of Ala-|-Gly bond in repressor LexA.. In terms of biological role, represses a number of genes involved in the response to DNA damage (SOS response), including recA and lexA. In the presence of single-stranded DNA, RecA interacts with LexA causing an autocatalytic cleavage which disrupts the DNA-binding part of LexA, leading to derepression of the SOS regulon and eventually DNA repair. This chain is LexA repressor, found in Anaeromyxobacter dehalogenans (strain 2CP-C).